A 497-amino-acid chain; its full sequence is Transcription termination/antitermination protein NusA (497 aa).

The S1 motif domain maps to glycine 135–serine 200. The KH domain occupies arginine 302 to isoleucine 372. Tandem repeats lie at residues lysine 364–leucine 414 and glycine 439–cysteine 489. A 2 X 51 AA approximate repeats region spans residues lysine 364–cysteine 489.

This sequence belongs to the NusA family. Monomer. Binds directly to the core enzyme of the DNA-dependent RNA polymerase and to nascent RNA.

It localises to the cytoplasm. Functionally, participates in both transcription termination and antitermination. The polypeptide is Transcription termination/antitermination protein NusA (Buchnera aphidicola subsp. Baizongia pistaciae (strain Bp)).